Consider the following 436-residue polypeptide: DNA primase DnaG (436 aa).

Residues 169–243 (DSIIVVEGRA…DIDYVARAPY (75 aa)) form the Toprim domain. Residues glutamate 175, aspartate 217, and aspartate 219 each coordinate Mg(2+).

This sequence belongs to the archaeal DnaG primase family. Forms a ternary complex with MCM helicase and DNA. Mg(2+) serves as cofactor.

It catalyses the reaction ssDNA + n NTP = ssDNA/pppN(pN)n-1 hybrid + (n-1) diphosphate.. RNA polymerase that catalyzes the synthesis of short RNA molecules used as primers for DNA polymerase during DNA replication. In Methanococcus maripaludis (strain DSM 14266 / JCM 13030 / NBRC 101832 / S2 / LL), this protein is DNA primase DnaG.